The primary structure comprises 350 residues: ATPase GET3 (350 aa).

26–33 (KGGVGKTT) contributes to the ATP binding site. Asp57 is an active-site residue. ATP is bound by residues Glu243 and Asn270. Zn(2+) contacts are provided by Cys282 and Cys285.

The protein belongs to the arsA ATPase family. In terms of assembly, homodimer. Component of the Golgi to ER traffic (GET) complex, which is composed of GET1, GET2 and GET3. Within the complex, GET1 and GET2 form a heterotetramer which is stabilized by phosphatidylinositol binding and which binds to the GET3 homodimer. Interacts with the chloride channel protein GEF1.

It is found in the cytoplasm. The protein resides in the endoplasmic reticulum. The protein localises to the golgi apparatus. ATPase required for the post-translational delivery of tail-anchored (TA) proteins to the endoplasmic reticulum. Recognizes and selectively binds the transmembrane domain of TA proteins in the cytosol. This complex then targets to the endoplasmic reticulum by membrane-bound receptors GET1 and GET2, where the tail-anchored protein is released for insertion. This process is regulated by ATP binding and hydrolysis. ATP binding drives the homodimer towards the closed dimer state, facilitating recognition of newly synthesized TA membrane proteins. ATP hydrolysis is required for insertion. Subsequently, the homodimer reverts towards the open dimer state, lowering its affinity for the GET1-GET2 receptor, and returning it to the cytosol to initiate a new round of targeting. Cooperates with the HDEL receptor ERD2 to mediate the ATP-dependent retrieval of resident ER proteins that contain a C-terminal H-D-E-L retention signal from the Golgi to the ER. Involved in low-level resistance to the oxyanions arsenite and arsenate, and in heat tolerance. The polypeptide is ATPase GET3 (Candida dubliniensis (strain CD36 / ATCC MYA-646 / CBS 7987 / NCPF 3949 / NRRL Y-17841) (Yeast)).